The chain runs to 861 residues: Leucine--tRNA ligase (861 aa).

The 'HIGH' region motif lies at Pro-42–His-52. The 'KMSKS' region signature appears at Lys-619–Ser-623. Lys-622 is an ATP binding site.

The protein belongs to the class-I aminoacyl-tRNA synthetase family.

The protein resides in the cytoplasm. It catalyses the reaction tRNA(Leu) + L-leucine + ATP = L-leucyl-tRNA(Leu) + AMP + diphosphate. This chain is Leucine--tRNA ligase, found in Haemophilus ducreyi (strain 35000HP / ATCC 700724).